Reading from the N-terminus, the 208-residue chain is Uracil phosphoribosyltransferase (208 aa).

5-phospho-alpha-D-ribose 1-diphosphate contacts are provided by residues arginine 78, arginine 103, and 130–138; that span reads DPMLATGGT. Uracil-binding positions include isoleucine 193 and 198 to 200; that span reads GDA. Position 199 (aspartate 199) interacts with 5-phospho-alpha-D-ribose 1-diphosphate.

Belongs to the UPRTase family. The cofactor is Mg(2+).

It catalyses the reaction UMP + diphosphate = 5-phospho-alpha-D-ribose 1-diphosphate + uracil. The protein operates within pyrimidine metabolism; UMP biosynthesis via salvage pathway; UMP from uracil: step 1/1. Its activity is regulated as follows. Allosterically activated by GTP. In terms of biological role, catalyzes the conversion of uracil and 5-phospho-alpha-D-ribose 1-diphosphate (PRPP) to UMP and diphosphate. This chain is Uracil phosphoribosyltransferase, found in Desulforapulum autotrophicum (strain ATCC 43914 / DSM 3382 / VKM B-1955 / HRM2) (Desulfobacterium autotrophicum).